A 212-amino-acid polypeptide reads, in one-letter code: ATP synthase F(0) complex subunit a (212 aa).

Helical transmembrane passes span 3-23 (MMGI…MFTS), 58-78 (WAAM…LGLL), 87-107 (QLSM…LTGL), 128-148 (IPLL…ALGV), 154-174 (LTAG…LMPT), and 179-199 (ALST…VAMI).

It belongs to the ATPase A chain family. As to quaternary structure, component of the ATP synthase complex composed at least of ATP5F1A/subunit alpha, ATP5F1B/subunit beta, ATP5MC1/subunit c (homooctomer), MT-ATP6/subunit a, MT-ATP8/subunit 8, ATP5ME/subunit e, ATP5MF/subunit f, ATP5MG/subunit g, ATP5MK/subunit k, ATP5MJ/subunit j, ATP5F1C/subunit gamma, ATP5F1D/subunit delta, ATP5F1E/subunit epsilon, ATP5PF/subunit F6, ATP5PB/subunit b, ATP5PD/subunit d, ATP5PO/subunit OSCP. ATP synthase complex consists of a soluble F(1) head domain (subunits alpha(3) and beta(3)) - the catalytic core - and a membrane F(0) domain - the membrane proton channel (subunits c, a, 8, e, f, g, k and j). These two domains are linked by a central stalk (subunits gamma, delta, and epsilon) rotating inside the F1 region and a stationary peripheral stalk (subunits F6, b, d, and OSCP). Interacts with DNAJC30; interaction is direct.

Its subcellular location is the mitochondrion inner membrane. It catalyses the reaction H(+)(in) = H(+)(out). Its function is as follows. Subunit a, of the mitochondrial membrane ATP synthase complex (F(1)F(0) ATP synthase or Complex V) that produces ATP from ADP in the presence of a proton gradient across the membrane which is generated by electron transport complexes of the respiratory chain. ATP synthase complex consist of a soluble F(1) head domain - the catalytic core - and a membrane F(1) domain - the membrane proton channel. These two domains are linked by a central stalk rotating inside the F(1) region and a stationary peripheral stalk. During catalysis, ATP synthesis in the catalytic domain of F(1) is coupled via a rotary mechanism of the central stalk subunits to proton translocation. With the subunit c (ATP5MC1), forms the proton-conducting channel in the F(0) domain, that contains two crucial half-channels (inlet and outlet) that facilitate proton movement from the mitochondrial intermembrane space (IMS) into the matrix. Protons are taken up via the inlet half-channel and released through the outlet half-channel, following a Grotthuss mechanism. The sequence is that of ATP synthase F(0) complex subunit a from Tropidurus montanus (Lizard).